The following is a 782-amino-acid chain: LINE-1 type transposase domain-containing protein 1 (782 aa).

3 disordered regions span residues 1-30 (MSGV…TATS), 90-200 (QEGD…GGAG), and 338-397 (NKGT…SAEE). Composition is skewed to basic and acidic residues over residues 11–27 (LQKE…ERKT) and 95–107 (ISER…KVEE). Ser-136 is modified (phosphoserine). Basic and acidic residues-rich tracts occupy residues 143–158 (SLER…HGRC) and 183–194 (EENRLKAPKESP). Over residues 347–396 (GEEEEISETQGEETSEGETSELGEEEGSESEEEEESSESEEEEESSESAE) the composition is skewed to acidic residues. Phosphoserine is present on residues Ser-407, Ser-409, Ser-442, Ser-478, Ser-490, Ser-559, and Ser-567.

It belongs to the transposase 22 family.

This is LINE-1 type transposase domain-containing protein 1 (L1td1) from Mus musculus (Mouse).